The following is a 276-amino-acid chain: MAIKKFRPTSPALRQMTVLVSDEITCNQPEKSLLVNLKKNAGRNVHGRITVRHRGGGQKRKYRIIDFKRDKDGIPAKVATIEYDPNRTANIALLNYADGEKRYILAPVGINVGDTILSGLGADIKPGNCLALKDMPVGTIIHNIELKPGKGAQLVRSAGVSAQLMAKEGKNALLRLPSGEMRLVSINCKATIGQVGNIEHGNVVIGKAGRKRHMGIRPTVRGSVMNPNDHPHGGGEGRSPIGRPSPVTPWGKPALGYKTRKKNKASNKLIVSRRTK.

Positions 219 to 276 (TVRGSVMNPNDHPHGGGEGRSPIGRPSPVTPWGKPALGYKTRKKNKASNKLIVSRRTK) are disordered. The segment covering 258 to 276 (KTRKKNKASNKLIVSRRTK) has biased composition (basic residues).

Belongs to the universal ribosomal protein uL2 family. As to quaternary structure, part of the 50S ribosomal subunit. Forms a bridge to the 30S subunit in the 70S ribosome.

Functionally, one of the primary rRNA binding proteins. Required for association of the 30S and 50S subunits to form the 70S ribosome, for tRNA binding and peptide bond formation. It has been suggested to have peptidyltransferase activity; this is somewhat controversial. Makes several contacts with the 16S rRNA in the 70S ribosome. This Clostridioides difficile (strain 630) (Peptoclostridium difficile) protein is Large ribosomal subunit protein uL2.